We begin with the raw amino-acid sequence, 324 residues long: Elongation factor Ts, mitochondrial (324 aa).

The transit peptide at M1–S44 directs the protein to the mitochondrion. N6-succinyllysine is present on residues K75 and K132. The residue at position 269 (S269) is a Phosphoserine.

Belongs to the EF-Ts family.

It localises to the mitochondrion. In terms of biological role, associates with the EF-Tu.GDP complex and induces the exchange of GDP to GTP. It remains bound to the aminoacyl-tRNA.EF-Tu.GTP complex up to the GTP hydrolysis stage on the ribosome. The protein is Elongation factor Ts, mitochondrial (Tsfm) of Rattus norvegicus (Rat).